We begin with the raw amino-acid sequence, 123 residues long: Small ribosomal subunit protein uS12 (123 aa).

Asp89 is subject to 3-methylthioaspartic acid.

Belongs to the universal ribosomal protein uS12 family. Part of the 30S ribosomal subunit. Contacts proteins S8 and S17. May interact with IF1 in the 30S initiation complex.

Its function is as follows. With S4 and S5 plays an important role in translational accuracy. Functionally, interacts with and stabilizes bases of the 16S rRNA that are involved in tRNA selection in the A site and with the mRNA backbone. Located at the interface of the 30S and 50S subunits, it traverses the body of the 30S subunit contacting proteins on the other side and probably holding the rRNA structure together. The combined cluster of proteins S8, S12 and S17 appears to hold together the shoulder and platform of the 30S subunit. The polypeptide is Small ribosomal subunit protein uS12 (Desulfovibrio desulfuricans (strain ATCC 27774 / DSM 6949 / MB)).